The following is a 253-amino-acid chain: 5'/3'-nucleotidase SurE (253 aa).

A divalent metal cation is bound by residues D8, D9, S39, and N92.

This sequence belongs to the SurE nucleotidase family. Requires a divalent metal cation as cofactor.

Its subcellular location is the cytoplasm. It catalyses the reaction a ribonucleoside 5'-phosphate + H2O = a ribonucleoside + phosphate. The catalysed reaction is a ribonucleoside 3'-phosphate + H2O = a ribonucleoside + phosphate. It carries out the reaction [phosphate](n) + H2O = [phosphate](n-1) + phosphate + H(+). Functionally, nucleotidase with a broad substrate specificity as it can dephosphorylate various ribo- and deoxyribonucleoside 5'-monophosphates and ribonucleoside 3'-monophosphates with highest affinity to 3'-AMP. Also hydrolyzes polyphosphate (exopolyphosphatase activity) with the preference for short-chain-length substrates (P20-25). Might be involved in the regulation of dNTP and NTP pools, and in the turnover of 3'-mononucleotides produced by numerous intracellular RNases (T1, T2, and F) during the degradation of various RNAs. The chain is 5'/3'-nucleotidase SurE from Serratia proteamaculans (strain 568).